The chain runs to 158 residues: Vasotocin-neurophysin VT 2 (158 aa).

Positions 1–19 are cleaved as a signal peptide; the sequence is MPHSTLLLCVIGLLAFSSA. Cys20 and Cys25 are disulfide-bonded. Residue Gly28 is modified to Glycine amide. 7 disulfide bridges follow: Cys41/Cys85, Cys44/Cys58, Cys52/Cys75, Cys59/Cys65, Cys92/Cys105, Cys99/Cys117, and Cys106/Cys111.

The protein belongs to the vasopressin/oxytocin family. Post-translationally, seven disulfide bonds are present in neurophysin.

Its subcellular location is the secreted. Vasotocin is an antidiuretic hormone. This is Vasotocin-neurophysin VT 2 from Oncorhynchus keta (Chum salmon).